We begin with the raw amino-acid sequence, 173 residues long: C-type lectin mosGCTL-7 (173 aa).

An N-terminal signal peptide occupies residues 1–24; sequence MVVGWSLLGWALSWLAVATVVVSA. The 117-residue stretch at 51-167 folds into the C-type lectin domain; the sequence is NWFKATEYCH…CWDEYYFVCE (117 aa). 2 disulfide bridges follow: C59/C166 and C139/C158. 2 N-linked (GlcNAc...) asparagine glycosylation sites follow: N119 and N144.

Interacts with putative receptor-type tyrosine-protein phosphatase mosPTP-1; the interaction may mediate the recruitment of Japanese encephalitis virus particles in complex with C-type lectin mosGCTL-7 to the cell surface.

The protein resides in the secreted. Functionally, carbohydrate-binding protein. Its function is as follows. (Microbial infection) Facilitates Japanese encephalitis virus infection in mosquitoes. The chain is C-type lectin mosGCTL-7 from Culex quinquefasciatus (Southern house mosquito).